A 279-amino-acid chain; its full sequence is ATP synthase gamma chain (279 aa).

It belongs to the ATPase gamma chain family. In terms of assembly, F-type ATPases have 2 components, CF(1) - the catalytic core - and CF(0) - the membrane proton channel. CF(1) has five subunits: alpha(3), beta(3), gamma(1), delta(1), epsilon(1). CF(0) has three main subunits: a, b and c.

The protein resides in the cell membrane. In terms of biological role, produces ATP from ADP in the presence of a proton gradient across the membrane. The gamma chain is believed to be important in regulating ATPase activity and the flow of protons through the CF(0) complex. This Mycoplasma pneumoniae (strain ATCC 29342 / M129 / Subtype 1) (Mycoplasmoides pneumoniae) protein is ATP synthase gamma chain.